The primary structure comprises 245 residues: MYRYKITIEYLGTDLAGWQRQAGVMSVQQILEEAIYKFSGEQVILFGSGRTDAGVHAIGQVAHFDLSKYLEPHKIITAINYFARPYAVGVWNCELAPNNFHARFSATSRYYIYRIINRPYPSVIDLNRAWWISSPLDVPAMQQAAVYLLGKHDFTSFRASSCQSKSSIKTLTELNIIKEDEEIKLYLSAPSFLHHMVRNIVGSLVLVGKNIWQVEQIKDVLEAKDRKAAGPTAPASGLYFVKTAY.

The Nucleophile role is filled by aspartate 52. Position 111 (tyrosine 111) interacts with substrate.

The protein belongs to the tRNA pseudouridine synthase TruA family. Homodimer.

It carries out the reaction uridine(38/39/40) in tRNA = pseudouridine(38/39/40) in tRNA. In terms of biological role, formation of pseudouridine at positions 38, 39 and 40 in the anticodon stem and loop of transfer RNAs. The sequence is that of tRNA pseudouridine synthase A from Rickettsia africae (strain ESF-5).